A 504-amino-acid chain; its full sequence is Anthocyanidin 3-O-glucoside 5-O-glucosyltransferase (504 aa).

Histidine 23 acts as the Proton acceptor in catalysis. Histidine 23 is a binding site for an anthocyanidin. The disordered stretch occupies residues 107 to 126 (TKKGQGQGQGQGQGQGQGQG). Residues 111–125 (QGQGQGQGQGQGQGQ) are compositionally biased toward gly residues. Positions 157, 377, 392, 395, 396, 397, 400, 416, and 417 each coordinate UDP-alpha-D-glucose.

The protein belongs to the UDP-glycosyltransferase family. Predominantly expressed in petals and weakly in filaments. Not expressed in leaves, stems and other floral organs.

The catalysed reaction is an anthocyanidin 3-O-beta-D-glucoside + UDP-alpha-D-glucose = an anthocyanidin 3,5-di-O-beta-D-glucoside + UDP + 2 H(+). The protein operates within pigment biosynthesis; anthocyanin biosynthesis. Its function is as follows. Catalyzes the glucosylation at the O-5 position of anthocyanidin 3-glucosides to form anthocyanidin 3,5-di-O-glucosides using UDP-glucose as sugar donor. Anthocyanidin 3,5-di-O-glucosides are molecules that are responsible for pigmentation. Involved in biosynsthesis of accumulate gentiodelphin, a unique polyacylated delphinidin-type anthocyanin, in the petals. Also acts on anthocyanidin 3-O-(6-O-malonylglucoside). Much less active with hydroxycinnamoylglucose derivatives. No activity in the absence of the 3-O-glucoside group. The polypeptide is Anthocyanidin 3-O-glucoside 5-O-glucosyltransferase (5GT7) (Gentiana triflora (Clustered gentian)).